The chain runs to 272 residues: Protein FAM210A (272 aa).

One can recognise a DUF1279 domain in the interval Asp117–Lys229. A helical transmembrane segment spans residues Val136–Ala156. Residues Lys229–Val271 adopt a coiled-coil conformation. The segment at Lys246–Glu272 is disordered.

It belongs to the FAM210 family. As to quaternary structure, interacts with ATAD3A.

It localises to the membrane. It is found in the mitochondrion. The protein localises to the cytoplasm. Functionally, may play a role in the structure and strength of both muscle and bone. In Homo sapiens (Human), this protein is Protein FAM210A (FAM210A).